A 562-amino-acid polypeptide reads, in one-letter code: Probable Xaa-Pro aminopeptidase PEPP (562 aa).

Mn(2+) is bound by residues Asp-358, Asp-369, Glu-492, and Glu-532.

It belongs to the peptidase M24B family. The cofactor is Mn(2+).

The enzyme catalyses Release of any N-terminal amino acid, including proline, that is linked to proline, even from a dipeptide or tripeptide.. In terms of biological role, catalyzes the removal of a penultimate prolyl residue from the N-termini of peptides. This Leptosphaeria maculans (strain JN3 / isolate v23.1.3 / race Av1-4-5-6-7-8) (Blackleg fungus) protein is Probable Xaa-Pro aminopeptidase PEPP (PEPP).